The primary structure comprises 222 residues: GTP cyclohydrolase 1 (222 aa).

Zn(2+)-binding residues include Cys111, His114, and Cys182.

The protein belongs to the GTP cyclohydrolase I family. As to quaternary structure, toroid-shaped homodecamer, composed of two pentamers of five dimers.

It carries out the reaction GTP + H2O = 7,8-dihydroneopterin 3'-triphosphate + formate + H(+). The protein operates within cofactor biosynthesis; 7,8-dihydroneopterin triphosphate biosynthesis; 7,8-dihydroneopterin triphosphate from GTP: step 1/1. Allosteric enzyme. Activity is modulated by K(+), divalent cations, UTP, and tetrahydrobiopterin. Tetrahydrobiopterin is an inhibitor of this enzyme. This chain is GTP cyclohydrolase 1, found in Salmonella typhi.